The primary structure comprises 391 residues: Putative gustatory receptor 36b (391 aa).

The Cytoplasmic portion of the chain corresponds to 1 to 4 (MVDW). Residues 5 to 25 (VVLLLKAVHIYCYLIGLSNFE) traverse the membrane as a helical segment. At 26–39 (FDCRTGRVFKSRRC) the chain is on the extracellular side. Residues 40–60 (TIYAFMANIFILITIIYNFTA) traverse the membrane as a helical segment. Residues 61 to 74 (HGDTNLLFQSANKL) are Cytoplasmic-facing. The chain crosses the membrane as a helical span at residues 75–95 (HEYVIIIMSGLKIVAGLITVL). Over 96 to 127 (NRWLQRGQMMQLVKDVIRLYMINPQLKSMIRW) the chain is Extracellular. Residues 128–148 (GILLKAFISFAIELLQVTLSV) traverse the membrane as a helical segment. At 149–165 (DALDRQGTAEMMGLLVK) the chain is on the cytoplasmic side. Residues 166-186 (LCVSFIMNLAISQHFLVILLI) traverse the membrane as a helical segment. The Extracellular portion of the chain corresponds to 187 to 284 (RAQYRIMNAK…YKYGPHNLKL (98 aa)). The chain crosses the membrane as a helical span at residues 285-305 (SAKTSIIVCILITLFYLDALV). Residues 306–363 (NCNNMLRVLDHHKDFLGLLEERTVFASSLDIRLEESFESLQLQLARNPLKINVMGMFP) lie on the Cytoplasmic side of the membrane. A helical membrane pass occupies residues 364-384 (ITRGSTAAMCASVIVNSIFLI). At 385–391 (QFDMEFF) the chain is on the extracellular side.

Belongs to the insect chemoreceptor superfamily. Gustatory receptor (GR) family. Gr22e subfamily. Expressed in neurons of the terminal external chemosensory organ of larvae.

The protein localises to the cell membrane. Its function is as follows. Probable gustatory receptor which mediates acceptance or avoidance behavior, depending on its substrates. This Drosophila melanogaster (Fruit fly) protein is Putative gustatory receptor 36b (Gr36b).